The sequence spans 339 residues: Phosphate acyltransferase (339 aa).

The protein belongs to the PlsX family. As to quaternary structure, homodimer. Probably interacts with PlsY.

The protein resides in the cytoplasm. It catalyses the reaction a fatty acyl-[ACP] + phosphate = an acyl phosphate + holo-[ACP]. Its pathway is lipid metabolism; phospholipid metabolism. In terms of biological role, catalyzes the reversible formation of acyl-phosphate (acyl-PO(4)) from acyl-[acyl-carrier-protein] (acyl-ACP). This enzyme utilizes acyl-ACP as fatty acyl donor, but not acyl-CoA. The protein is Phosphate acyltransferase of Helicobacter pylori (strain J99 / ATCC 700824) (Campylobacter pylori J99).